A 280-amino-acid chain; its full sequence is Large ribosomal subunit protein uL2 (280 aa).

The interval 215–280 (GRRPHVRGSA…IQRANDKKEK (66 aa)) is disordered.

The protein belongs to the universal ribosomal protein uL2 family. In terms of assembly, part of the 50S ribosomal subunit. Forms a bridge to the 30S subunit in the 70S ribosome.

Its function is as follows. One of the primary rRNA binding proteins. Required for association of the 30S and 50S subunits to form the 70S ribosome, for tRNA binding and peptide bond formation. It has been suggested to have peptidyltransferase activity; this is somewhat controversial. Makes several contacts with the 16S rRNA in the 70S ribosome. In Dictyoglomus thermophilum (strain ATCC 35947 / DSM 3960 / H-6-12), this protein is Large ribosomal subunit protein uL2.